A 227-amino-acid chain; its full sequence is dTTP/UTP pyrophosphatase (227 aa).

The active-site Proton acceptor is Asp-98.

It belongs to the Maf family. YhdE subfamily. The cofactor is a divalent metal cation.

Its subcellular location is the cytoplasm. It catalyses the reaction dTTP + H2O = dTMP + diphosphate + H(+). It carries out the reaction UTP + H2O = UMP + diphosphate + H(+). Its function is as follows. Nucleoside triphosphate pyrophosphatase that hydrolyzes dTTP and UTP. May have a dual role in cell division arrest and in preventing the incorporation of modified nucleotides into cellular nucleic acids. The polypeptide is dTTP/UTP pyrophosphatase (Bartonella quintana (strain Toulouse) (Rochalimaea quintana)).